The sequence spans 185 residues: Heavy metal-associated isoprenylated plant protein 11 (185 aa).

In terms of domain architecture, HMA spans 39 to 106 (QQNTNVVFKL…ICKHVAIIAA (68 aa)). The span at 109–158 (IREPEQNRNPVTRREPNREPEQNRSRVTRREPSREPEPNRAPLARRESRP) shows a compositional bias: basic and acidic residues. The interval 109–185 (IREPEQNRNP…GENSDGCIIM (77 aa)) is disordered. Position 182 is a cysteine methyl ester (Cys182). Residue Cys182 is the site of S-farnesyl cysteine attachment. The propeptide at 183-185 (IIM) is removed in mature form.

It belongs to the HIPP family.

Its function is as follows. Probable heavy-metal-binding protein. This Arabidopsis thaliana (Mouse-ear cress) protein is Heavy metal-associated isoprenylated plant protein 11.